Here is a 577-residue protein sequence, read N- to C-terminus: Arginine--tRNA ligase (577 aa).

The short motif at 122 to 132 (PNVAKEMHVGH) is the 'HIGH' region element.

Belongs to the class-I aminoacyl-tRNA synthetase family. Monomer.

The protein resides in the cytoplasm. The catalysed reaction is tRNA(Arg) + L-arginine + ATP = L-arginyl-tRNA(Arg) + AMP + diphosphate. This is Arginine--tRNA ligase from Citrobacter koseri (strain ATCC BAA-895 / CDC 4225-83 / SGSC4696).